The chain runs to 248 residues: DNA repair protein RecO (248 aa).

Belongs to the RecO family.

Involved in DNA repair and RecF pathway recombination. This Bacillus cytotoxicus (strain DSM 22905 / CIP 110041 / 391-98 / NVH 391-98) protein is DNA repair protein RecO.